The chain runs to 392 residues: MEETRGISDPENGSSSYGGKPPNPLSFSSSSAAAAVYRQTFDGERSLAPCNKRSLVRHSSLVKTMVSDISVENEFTIEKNKSEFVPATRSGAWSDIGSRSSMEDAYLCVDNFMDSFGLLNSEAGPSAFYGVFDGHGGKHAAEFACHHIPRYIVEDQEFPSEINKVLSSAFLQTDTAFLEACSLDGSLASGTTALAAILFGRSLVVANAGDCRAVLSRQGKAIEMSRDHKPMSSKERRRIEASGGHVFDGYLNGQLNVARALGDFHMEGMKKKKDGSDCGPLIAEPELMTTKLTEEDEFLIIGCDGVWDVFMSQNAVDFARRRLQEHNDPVMCSKELVEEALKRKSADNVTAVVVCLQPQPPPNLVAPRLRVHRSFSAEGLKDLQSYLDGLGN.

The tract at residues 1-26 (MEETRGISDPENGSSSYGGKPPNPLS) is disordered. A PPM-type phosphatase domain is found at 89–356 (RSGAWSDIGS…DNVTAVVVCL (268 aa)). Residues Asp-133, Gly-134, Asp-304, and Asp-347 each coordinate Mn(2+).

Belongs to the PP2C family. Mg(2+) serves as cofactor. Mn(2+) is required as a cofactor.

The enzyme catalyses O-phospho-L-seryl-[protein] + H2O = L-seryl-[protein] + phosphate. It catalyses the reaction O-phospho-L-threonyl-[protein] + H2O = L-threonyl-[protein] + phosphate. The sequence is that of Probable protein phosphatase 2C 22 from Arabidopsis thaliana (Mouse-ear cress).